A 501-amino-acid chain; its full sequence is Glycerol kinase (501 aa).

An ADP-binding site is contributed by Thr-12. The ATP site is built by Thr-12, Thr-13, and Ser-14. Thr-12 contributes to the sn-glycerol 3-phosphate binding site. Residue Arg-16 coordinates ADP. Sn-glycerol 3-phosphate is bound by residues Arg-82, Glu-83, Tyr-134, and Asp-244. Glycerol-binding residues include Arg-82, Glu-83, Tyr-134, Asp-244, and Gln-245. The ADP site is built by Thr-266 and Gly-310. Residues Thr-266, Gly-310, Gln-314, and Gly-411 each contribute to the ATP site. 2 residues coordinate ADP: Gly-411 and Asn-415.

This sequence belongs to the FGGY kinase family.

The enzyme catalyses glycerol + ATP = sn-glycerol 3-phosphate + ADP + H(+). It participates in polyol metabolism; glycerol degradation via glycerol kinase pathway; sn-glycerol 3-phosphate from glycerol: step 1/1. Its activity is regulated as follows. Inhibited by fructose 1,6-bisphosphate (FBP). Its function is as follows. Key enzyme in the regulation of glycerol uptake and metabolism. Catalyzes the phosphorylation of glycerol to yield sn-glycerol 3-phosphate. In Methylorubrum extorquens (strain PA1) (Methylobacterium extorquens), this protein is Glycerol kinase.